A 315-amino-acid chain; its full sequence is Acetyl-coenzyme A carboxylase carboxyl transferase subunit alpha (315 aa).

In terms of domain architecture, CoA carboxyltransferase C-terminal spans 39–293 (RLQDKSSTLT…RGELASQLAM (255 aa)).

The protein belongs to the AccA family. In terms of assembly, acetyl-CoA carboxylase is a heterohexamer composed of biotin carboxyl carrier protein (AccB), biotin carboxylase (AccC) and two subunits each of ACCase subunit alpha (AccA) and ACCase subunit beta (AccD).

It localises to the cytoplasm. It catalyses the reaction N(6)-carboxybiotinyl-L-lysyl-[protein] + acetyl-CoA = N(6)-biotinyl-L-lysyl-[protein] + malonyl-CoA. The protein operates within lipid metabolism; malonyl-CoA biosynthesis; malonyl-CoA from acetyl-CoA: step 1/1. In terms of biological role, component of the acetyl coenzyme A carboxylase (ACC) complex. First, biotin carboxylase catalyzes the carboxylation of biotin on its carrier protein (BCCP) and then the CO(2) group is transferred by the carboxyltransferase to acetyl-CoA to form malonyl-CoA. The sequence is that of Acetyl-coenzyme A carboxylase carboxyl transferase subunit alpha from Pseudomonas fluorescens (strain SBW25).